Reading from the N-terminus, the 547-residue chain is Chaperonin GroEL (547 aa).

ATP-binding positions include 29–32 (TLGP), 86–90 (DGTTT), Gly413, and Asp498.

Belongs to the chaperonin (HSP60) family. Forms a cylinder of 14 subunits composed of two heptameric rings stacked back-to-back. Interacts with the co-chaperonin GroES.

The protein localises to the cytoplasm. The enzyme catalyses ATP + H2O + a folded polypeptide = ADP + phosphate + an unfolded polypeptide.. In terms of biological role, together with its co-chaperonin GroES, plays an essential role in assisting protein folding. The GroEL-GroES system forms a nano-cage that allows encapsulation of the non-native substrate proteins and provides a physical environment optimized to promote and accelerate protein folding. The chain is Chaperonin GroEL from Herpetosiphon aurantiacus (strain ATCC 23779 / DSM 785 / 114-95).